The following is a 247-amino-acid chain: UDP-2,3-diacylglucosamine hydrolase (247 aa).

Positions 8, 10, 41, 79, and 115 each coordinate Mn(2+). Position 79-80 (N79–H80) interacts with substrate. The substrate site is built by D123, K165, K168, and H196. H196 and H198 together coordinate Mn(2+).

Belongs to the LpxH family. Requires Mn(2+) as cofactor.

It is found in the cell inner membrane. The catalysed reaction is UDP-2-N,3-O-bis[(3R)-3-hydroxytetradecanoyl]-alpha-D-glucosamine + H2O = 2-N,3-O-bis[(3R)-3-hydroxytetradecanoyl]-alpha-D-glucosaminyl 1-phosphate + UMP + 2 H(+). It functions in the pathway glycolipid biosynthesis; lipid IV(A) biosynthesis; lipid IV(A) from (3R)-3-hydroxytetradecanoyl-[acyl-carrier-protein] and UDP-N-acetyl-alpha-D-glucosamine: step 4/6. Hydrolyzes the pyrophosphate bond of UDP-2,3-diacylglucosamine to yield 2,3-diacylglucosamine 1-phosphate (lipid X) and UMP by catalyzing the attack of water at the alpha-P atom. Involved in the biosynthesis of lipid A, a phosphorylated glycolipid that anchors the lipopolysaccharide to the outer membrane of the cell. The chain is UDP-2,3-diacylglucosamine hydrolase from Blochmanniella floridana.